Consider the following 340-residue polypeptide: Beta-1,3-N-acetylglucosaminyltransferase radical fringe (340 aa).

Residues 1–4 (MKIT) lie on the Cytoplasmic side of the membrane. A helical; Signal-anchor for type II membrane protein membrane pass occupies residues 5–25 (YVGLIKVCFLVFLLLCATVLL). The Lumenal segment spans residues 26–340 (NISWRQRDSS…AFSLAEDPTR (315 aa)). Asparagine 42 carries an N-linked (GlcNAc...) asparagine glycan. A substrate-binding site is contributed by arginine 110. Residue asparagine 149 is glycosylated (N-linked (GlcNAc...) asparagine). 2 cysteine pairs are disulfide-bonded: cysteine 150–cysteine 161 and cysteine 179–cysteine 242. Aspartate 183 contacts substrate. Aspartate 184 contributes to the Mn(2+) binding site. Aspartate 272 is a catalytic residue. Histidine 296 lines the Mn(2+) pocket.

It belongs to the glycosyltransferase 31 family. Mn(2+) is required as a cofactor.

The protein resides in the golgi apparatus membrane. It carries out the reaction 3-O-(alpha-L-fucosyl)-L-threonyl-[EGF-like domain protein] + UDP-N-acetyl-alpha-D-glucosamine = 3-O-(N-acetyl-beta-D-glucosaminyl-(1-&gt;3)-alpha-L-fucosyl)-L-threonyl-[EGF-like domain protein] + UDP + H(+). It catalyses the reaction 3-O-(alpha-L-fucosyl)-L-seryl-[EGF-like domain protein] + UDP-N-acetyl-alpha-D-glucosamine = 3-O-(N-acetyl-beta-D-glucosaminyl-(1-&gt;3)-alpha-L-fucosyl)-L-seryl-[EGF-like domain protein] + UDP + H(+). Functionally, glycosyltransferase that initiates the elongation of O-linked fucose residues attached to EGF-like repeats in the extracellular domain of Notch molecules. The chain is Beta-1,3-N-acetylglucosaminyltransferase radical fringe (rfng) from Xenopus laevis (African clawed frog).